Consider the following 212-residue polypeptide: MGTEFNGLFDEWAHTYDSFVQGEDIQYKEVFAHYEDILEDVVNKSFGHVLEFGVGTGNLTNKLLLAGRTVYGIEPSREMRMIAKEKLPKEFSITEGDFLSFEVPNSIDTIVSTYAFHHLTDDEKNVAIAKYSQLLNKGGKIVFADTIFADQDAYDKTVEAAKQRGFHQLANDLQTEYYTRIPVMQTIFENNGFHVTFTRLNHFVWVMEATKQ.

3 residues coordinate S-adenosyl-L-methionine: Gly53, Glu74, and Asp97.

The protein belongs to the methyltransferase superfamily. YrrT family.

In terms of biological role, could be a S-adenosyl-L-methionine-dependent methyltransferase. This is an uncharacterized protein from Bacillus thuringiensis (strain Al Hakam).